The chain runs to 62 residues: Beta-defensin 33 (62 aa).

A signal peptide spans 1 to 20 (MRLLFLLFLLLVCLAQKTSG). Intrachain disulfides connect cysteine 30/cysteine 59, cysteine 37/cysteine 52, and cysteine 45/cysteine 60.

It belongs to the beta-defensin family.

Its subcellular location is the secreted. Functionally, has antibacterial activity. This Rattus norvegicus (Rat) protein is Beta-defensin 33 (Defb33).